Here is a 694-residue protein sequence, read N- to C-terminus: Elongation factor G (694 aa).

The 280-residue stretch at 9-288 (SKIRNIGIMA…VIVKWLPSPK (280 aa)) folds into the tr-type G domain. Residues 18–25 (AHIDAGKT), 82–86 (DTPGH), and 136–139 (NKMD) contribute to the GTP site.

Belongs to the TRAFAC class translation factor GTPase superfamily. Classic translation factor GTPase family. EF-G/EF-2 subfamily.

Its subcellular location is the cytoplasm. Functionally, catalyzes the GTP-dependent ribosomal translocation step during translation elongation. During this step, the ribosome changes from the pre-translocational (PRE) to the post-translocational (POST) state as the newly formed A-site-bound peptidyl-tRNA and P-site-bound deacylated tRNA move to the P and E sites, respectively. Catalyzes the coordinated movement of the two tRNA molecules, the mRNA and conformational changes in the ribosome. This is Elongation factor G from Chlamydia felis (strain Fe/C-56) (Chlamydophila felis).